We begin with the raw amino-acid sequence, 948 residues long: UvrABC system protein A (948 aa).

ATP is bound at residue 42–49; sequence GLSGSGKS. The C4-type zinc finger occupies 262–289; the sequence is CPVCSYSLPELEPRLFSFNNPMGSCPTC. ABC transporter domains follow at residues 319–596 and 616–945; these read WDKR…ENSV and VNPG…KYLK. 649–656 contacts ATP; it reads GVSGSGKS. The C4-type zinc-finger motif lies at 748–774; the sequence is CEACQGDGVIKVEMHFLPDVYVPCEVC.

The protein belongs to the ABC transporter superfamily. UvrA family. As to quaternary structure, forms a heterotetramer with UvrB during the search for lesions.

The protein resides in the cytoplasm. In terms of biological role, the UvrABC repair system catalyzes the recognition and processing of DNA lesions. UvrA is an ATPase and a DNA-binding protein. A damage recognition complex composed of 2 UvrA and 2 UvrB subunits scans DNA for abnormalities. When the presence of a lesion has been verified by UvrB, the UvrA molecules dissociate. This is UvrABC system protein A from Neisseria meningitidis serogroup A / serotype 4A (strain DSM 15465 / Z2491).